The sequence spans 766 residues: Serine/threonine-protein kinase tousled-like 1 (766 aa).

Position 1 is an N-acetylmethionine (methionine 1). Over residues 1 to 19 (MSVQSSSGSLEGPPSWSQL) the composition is skewed to polar residues. A disordered region spans residues 1–197 (MSVQSSSGSL…SPSPTALAFG (197 aa)). A compositionally biased stretch (low complexity) spans 20–33 (STSPTPGSAAAARS). Threonine 38 bears the Phosphothreonine mark. Basic and acidic residues predominate over residues 43-64 (RPREGAMDELHSLDPRRQELLE). Serine 54, serine 77, and serine 80 each carry phosphoserine. The segment covering 68–85 (TGVASGSTGSTGSCSVGA) has biased composition (low complexity). The span at 87 to 103 (ASTNNESSNHSFGSLGS) shows a compositional bias: polar residues. The segment covering 105-121 (SDKESETPEKKQSESSR) has biased composition (basic and acidic residues). Residues serine 134, serine 159, serine 174, and serine 176 each carry the phosphoserine modification. Residues 170 to 192 (SPQNSHSHSTPSSSVRPNSPSPT) are compositionally biased toward low complexity. Residues 230–281 (QDLEKKEGRIDDLLRANCDLRRQIDEQQKLLEKYKERLNKCISMSKKLLIEK) are a coiled coil. Residues 346 to 383 (LAKRKPPTANNSQAPSTNSEPKQRKNKAVNGAENDPFV) form a disordered region. Positions 353 to 365 (TANNSQAPSTNSE) are enriched in polar residues. A coiled-coil region spans residues 397 to 445 (HEQEEIFKLRLGHLKKEEAEIQAELERLERVRNLHIRELKRINNEDNSQ). In terms of domain architecture, Protein kinase spans 456–734 (YLLLHLLGRG…VHQLANDPYL (279 aa)). Residues 462-470 (LGRGGFSEV) and lysine 485 each bind ATP. Aspartate 586 acts as the Proton acceptor in catalysis. Position 743 is a phosphoserine (serine 743).

This sequence belongs to the protein kinase superfamily. Ser/Thr protein kinase family. As to quaternary structure, heterodimer with TLK2. Mg(2+) serves as cofactor. In terms of tissue distribution, widely expressed. Present in fetal placenta, liver, kidney and pancreas but not heart or skeletal muscle. Also found in adult cell lines. Isoform 3 is ubiquitously expressed in all tissues examined.

It localises to the nucleus. The catalysed reaction is L-seryl-[protein] + ATP = O-phospho-L-seryl-[protein] + ADP + H(+). It catalyses the reaction L-threonyl-[protein] + ATP = O-phospho-L-threonyl-[protein] + ADP + H(+). Its activity is regulated as follows. Cell-cycle regulated, maximal activity in S-phase. Inactivated by phosphorylation at Ser-743, potentially by CHEK1. Its function is as follows. Rapidly and transiently inhibited by phosphorylation following the generation of DNA double-stranded breaks during S-phase. This is cell cycle checkpoint and ATM-pathway dependent and appears to regulate processes involved in chromatin assembly. Isoform 3 phosphorylates and enhances the stability of the t-SNARE SNAP23, augmenting its assembly with syntaxin. Isoform 3 protects the cells from the ionizing radiation by facilitating the repair of DSBs. In vitro, phosphorylates histone H3 at 'Ser-10'. The protein is Serine/threonine-protein kinase tousled-like 1 (TLK1) of Homo sapiens (Human).